We begin with the raw amino-acid sequence, 43 residues long: Neurotrophin-4 (43 aa).

This sequence belongs to the NGF-beta family.

Functionally, NT-4 could play a role in oogenesis and/or early embryogenesis. NT-4 interacts with the low affinity NGF receptor and elicits neurite outgrowth from explanted dorsal root ganglia with no and lower activity in sympathetic and nodose ganglia, respectively. The protein is Neurotrophin-4 (NTF4) of Macrovipera lebetinus (Levantine viper).